The chain runs to 700 residues: Neoverrucotoxin subunit beta (700 aa).

Residues 506-700 (HMPGVETIKD…QKVNGQIKLL (195 aa)) form the B30.2/SPRY domain.

Belongs to the SNTX/VTX toxin family. As to quaternary structure, heterodimer of alpha and beta subunits. In terms of processing, not glycosylated. Post-translationally, four intrachain disulfide linkages are present in the heterodimer. No interchain disulfide bound links the two subunits. As to expression, expressed by the venom gland.

Its subcellular location is the secreted. In terms of biological role, has hemolytic and lethal activities. Its hemolytic activity is inhibited by anionic lipids, especially potently by cardiolipin. This Synanceia verrucosa (Reef stonefish) protein is Neoverrucotoxin subunit beta.